The primary structure comprises 496 residues: Probable cytosol aminopeptidase (496 aa).

Positions 258 and 263 each coordinate Mn(2+). Lys270 is a catalytic residue. Asp281, Asp340, and Glu342 together coordinate Mn(2+). Arg344 is a catalytic residue.

The protein belongs to the peptidase M17 family. Requires Mn(2+) as cofactor.

Its subcellular location is the cytoplasm. The enzyme catalyses Release of an N-terminal amino acid, Xaa-|-Yaa-, in which Xaa is preferably Leu, but may be other amino acids including Pro although not Arg or Lys, and Yaa may be Pro. Amino acid amides and methyl esters are also readily hydrolyzed, but rates on arylamides are exceedingly low.. It carries out the reaction Release of an N-terminal amino acid, preferentially leucine, but not glutamic or aspartic acids.. In terms of biological role, presumably involved in the processing and regular turnover of intracellular proteins. Catalyzes the removal of unsubstituted N-terminal amino acids from various peptides. The protein is Probable cytosol aminopeptidase of Helicobacter pylori (strain G27).